Reading from the N-terminus, the 239-residue chain is Small ribosomal subunit protein uS2 (239 aa).

This sequence belongs to the universal ribosomal protein uS2 family.

The polypeptide is Small ribosomal subunit protein uS2 (Francisella philomiragia subsp. philomiragia (strain ATCC 25017 / CCUG 19701 / FSC 153 / O#319-036)).